Here is an 801-residue protein sequence, read N- to C-terminus: Conserved oligomeric Golgi complex subunit 4 (801 aa).

The segment at Ile397 to Lys427 is disordered.

The protein belongs to the COG4 family. As to quaternary structure, component of the conserved oligomeric Golgi complex which is composed of eight different subunits and is required for normal Golgi morphology and localization.

The protein resides in the golgi apparatus membrane. Required for normal Golgi function. This chain is Conserved oligomeric Golgi complex subunit 4 (cogc-4), found in Caenorhabditis elegans.